A 95-amino-acid polypeptide reads, in one-letter code: Small ribosomal subunit protein bS20c (95 aa).

The segment at 76–95 (NGSAKKAKLTKRLKEKKISL) is disordered. Residues 80–95 (KKAKLTKRLKEKKISL) show a composition bias toward basic residues.

This sequence belongs to the bacterial ribosomal protein bS20 family.

Its subcellular location is the plastid. It is found in the chloroplast. In terms of biological role, binds directly to 16S ribosomal RNA. This Guillardia theta (Cryptophyte) protein is Small ribosomal subunit protein bS20c.